The chain runs to 672 residues: Single-strand DNA endonuclease ASTE1 (672 aa).

The interaction with SHLD2 stretch occupies residues 349 to 398; that stretch reads TFLHTQVENMQRPNAHRISQPIRQIIYGLLLNGPSHAEDIAQNTLPSQLL.

The protein belongs to the asteroid family. As to quaternary structure, interacts with SHLD1, SHLD2, SHLD3, RIF1 and MAD2L2/REV7.

Its function is as follows. Structure-specific DNA endonuclease that specifically cleaves single-stranded DNA and 3' overhang DNA. Contributes to the control of DNA double-strand break repair choice by antagonizing BRCA1-dependent homologous recombination (HR) and promoting non-homologous end-joining (NHEJ). Recruited to the single-stranded DNA ends by SHLD2 and cleaves the 3' exposed DNA ends, therefore inhibiting DNA end resection (necessary for HR) and promoting DNA end protection (necessary for NHEJ). In Mus musculus (Mouse), this protein is Single-strand DNA endonuclease ASTE1 (Aste1).